The following is a 99-amino-acid chain: Ferredoxin, vegetative (99 aa).

Positions 4-96 (YQVRLINKKR…DCTIRTHQEP (93 aa)) constitute a 2Fe-2S ferredoxin-type domain. Cys-42, Cys-47, Cys-50, and Cys-80 together coordinate [2Fe-2S] cluster.

It belongs to the 2Fe2S plant-type ferredoxin family. Requires [2Fe-2S] cluster as cofactor.

Ferredoxins are iron-sulfur proteins that transfer electrons in a wide variety of metabolic reactions. Donates electrons to the nitrogenase 2. This is Ferredoxin, vegetative (fdxH2) from Trichormus variabilis (strain ATCC 29413 / PCC 7937) (Anabaena variabilis).